The sequence spans 178 residues: Inner membrane-spanning protein YciB (178 aa).

5 helical membrane-spanning segments follow: residues 12-32 (LFFA…VAIV), 50-70 (PMQW…LVLH), 74-94 (FIMW…LISD), 120-140 (LTFA…FVAF), and 145-165 (AVWV…FVLA).

This sequence belongs to the YciB family.

Its subcellular location is the cell inner membrane. Functionally, plays a role in cell envelope biogenesis, maintenance of cell envelope integrity and membrane homeostasis. This chain is Inner membrane-spanning protein YciB, found in Laribacter hongkongensis (strain HLHK9).